A 69-amino-acid chain; its full sequence is Intrepicalcin (69 aa).

The signal sequence occupies residues 1-27; it reads MRQNTMTIIFIVFIVTFASLTIYGAEA. Positions 28–36 are excised as a propeptide; sequence SEANFLERR. Cystine bridges form between cysteine 39/cysteine 53, cysteine 46/cysteine 57, and cysteine 52/cysteine 68. The tract at residues 59 to 60 is essential for stimulation of [3H]ryanodine binding to RYR1; the sequence is RR.

Belongs to the scorpion calcin family. As to expression, expressed by the venom gland.

It is found in the secreted. In terms of biological role, this toxin stabilizes ryanodine receptor 1 (RyR1) opening in a long-lasting subconductance state (55% of the full conductance state). Furthermore, it triggers calcium release from sarcoplasmic vesicles (45.3 nM are enough to induce a sharp release, and 50% of the total calcium is released after toxin (100 nM) addition) probably by acting as a cell-penetrating peptide (CPP). In addition, it has been shown to dose-dependently stimulate ryanodine binding to RyR1 (EC(50)=17.4 nM). It also augments the bell-shaped calcium-[3H]ryanodine binding curve that is maximal at about 10 uM calcium concentration. It binds a different site as ryanodine. It acts synergistically with caffeine. In vivo, intracerebroventricular injection into mice induces neurotoxic symptoms, followed by death. This chain is Intrepicalcin, found in Thorellius intrepidus (Scorpion).